The primary structure comprises 122 residues: Large ribosomal subunit protein uL18 (122 aa).

Basic residues predominate over residues 1–19 (MSKLSRKQQTQKRHKRLRR). A disordered region spans residues 1-27 (MSKLSRKQQTQKRHKRLRRNLSGTESR).

It belongs to the universal ribosomal protein uL18 family. In terms of assembly, part of the 50S ribosomal subunit; part of the 5S rRNA/L5/L18/L25 subcomplex. Contacts the 5S and 23S rRNAs.

In terms of biological role, this is one of the proteins that bind and probably mediate the attachment of the 5S RNA into the large ribosomal subunit, where it forms part of the central protuberance. The sequence is that of Large ribosomal subunit protein uL18 from Prochlorococcus marinus (strain NATL1A).